A 745-amino-acid chain; its full sequence is NAD(P)H-quinone oxidoreductase subunit 5, chloroplastic (745 aa).

Helical transmembrane passes span 9 to 29 (WIIP…LLLF), 50 to 70 (WAFP…DLSI), 99 to 119 (IDSL…FVLI), 135 to 155 (FAYM…CNLI), 157 to 177 (IYIF…FWFT), 194 to 214 (IGDF…GSFE), 229 to 249 (NEVH…GAVA), 268 to 288 (TPIS…FLVA), 290 to 310 (LFPL…IGII), 337 to 357 (LGYM…FHLI), 364 to 384 (ALLF…VGYS), 406 to 426 (IAFL…CFWS), 435 to 455 (WLYS…TAFY), 550 to 570 (LFPM…AIPF), 610 to 630 (FSVS…KPFY), and 724 to 744 (FYLL…YFIL).

This sequence belongs to the complex I subunit 5 family. As to quaternary structure, NDH is composed of at least 16 different subunits, 5 of which are encoded in the nucleus.

It localises to the plastid. The protein localises to the chloroplast thylakoid membrane. It carries out the reaction a plastoquinone + NADH + (n+1) H(+)(in) = a plastoquinol + NAD(+) + n H(+)(out). The catalysed reaction is a plastoquinone + NADPH + (n+1) H(+)(in) = a plastoquinol + NADP(+) + n H(+)(out). Its function is as follows. NDH shuttles electrons from NAD(P)H:plastoquinone, via FMN and iron-sulfur (Fe-S) centers, to quinones in the photosynthetic chain and possibly in a chloroplast respiratory chain. The immediate electron acceptor for the enzyme in this species is believed to be plastoquinone. Couples the redox reaction to proton translocation, and thus conserves the redox energy in a proton gradient. The protein is NAD(P)H-quinone oxidoreductase subunit 5, chloroplastic (ndhF) of Gossypium barbadense (Sea Island cotton).